Reading from the N-terminus, the 127-residue chain is Aspartate 1-decarboxylase (127 aa).

Residue S25 is the Schiff-base intermediate with substrate; via pyruvic acid of the active site. A Pyruvic acid (Ser) modification is found at S25. Position 57 (T57) interacts with substrate. The active-site Proton donor is the Y58. A substrate-binding site is contributed by 73–75; it reads GAA.

This sequence belongs to the PanD family. In terms of assembly, heterooctamer of four alpha and four beta subunits. Requires pyruvate as cofactor. Is synthesized initially as an inactive proenzyme, which is activated by self-cleavage at a specific serine bond to produce a beta-subunit with a hydroxyl group at its C-terminus and an alpha-subunit with a pyruvoyl group at its N-terminus.

It is found in the cytoplasm. It carries out the reaction L-aspartate + H(+) = beta-alanine + CO2. Its pathway is cofactor biosynthesis; (R)-pantothenate biosynthesis; beta-alanine from L-aspartate: step 1/1. Functionally, catalyzes the pyruvoyl-dependent decarboxylation of aspartate to produce beta-alanine. In Clostridium botulinum (strain Loch Maree / Type A3), this protein is Aspartate 1-decarboxylase.